The following is a 417-amino-acid chain: NADH-quinone oxidoreductase subunit D (417 aa).

It belongs to the complex I 49 kDa subunit family. As to quaternary structure, NDH-1 is composed of 14 different subunits. Subunits NuoB, C, D, E, F, and G constitute the peripheral sector of the complex.

The protein localises to the cell inner membrane. It carries out the reaction a quinone + NADH + 5 H(+)(in) = a quinol + NAD(+) + 4 H(+)(out). Functionally, NDH-1 shuttles electrons from NADH, via FMN and iron-sulfur (Fe-S) centers, to quinones in the respiratory chain. The immediate electron acceptor for the enzyme in this species is believed to be ubiquinone. Couples the redox reaction to proton translocation (for every two electrons transferred, four hydrogen ions are translocated across the cytoplasmic membrane), and thus conserves the redox energy in a proton gradient. This is NADH-quinone oxidoreductase subunit D from Halorhodospira halophila (strain DSM 244 / SL1) (Ectothiorhodospira halophila (strain DSM 244 / SL1)).